The following is a 570-amino-acid chain: Acetolactate synthase (570 aa).

Glu60 is a thiamine diphosphate binding site. Residues Gln162, 266–287, and 308–327 contribute to the FAD site; these read FRNQ…IGYD and DEII…LIGD. Positions 399–479 are thiamine pyrophosphate binding; sequence SHAIWMSRYF…IVHIVWNDST (81 aa). A Mg(2+)-binding site is contributed by Asp450.

Belongs to the TPP enzyme family. Mg(2+) is required as a cofactor. The cofactor is thiamine diphosphate.

It carries out the reaction 2 pyruvate + H(+) = (2S)-2-acetolactate + CO2. The protein operates within polyol metabolism; (R,R)-butane-2,3-diol biosynthesis; (R,R)-butane-2,3-diol from pyruvate: step 1/3. In Bacillus subtilis (strain 168), this protein is Acetolactate synthase (alsS).